The sequence spans 219 residues: ADP-sugar pyrophosphatase (219 aa).

An N-acetylmethionine modification is found at M1. Residues S3 and S10 each carry the phosphoserine modification. Position 28 (W28) interacts with substrate. K42 participates in a covalent cross-link: Glycyl lysine isopeptide (Lys-Gly) (interchain with G-Cter in SUMO2). At T45 the chain carries Phosphothreonine. Substrate is bound by residues 46–47 and R51; that span reads WE. Residues 57-197 enclose the Nudix hydrolase domain; it reads QTADGVAVIP…EEHLTVDARV (141 aa). The residue at position 74 (Y74) is a Phosphotyrosine. Substrate is bound at residue R84. A Mg(2+)-binding site is contributed by A96. Residues 97–118 carry the Nudix box motif; that stretch reads GLIDDGETPEAAALRELEEETG. L98 serves as a coordination point for substrate. Mg(2+) is bound by residues E112 and E116. D133 provides a ligand contact to substrate. E166 is a binding site for Mg(2+). 2 positions are modified to N6-acetyllysine: K210 and K218.

This sequence belongs to the Nudix hydrolase family. As to quaternary structure, homodimer. Interacts with PARG. Requires Mg(2+) as cofactor. Post-translationally, phosphorylation at Thr-45 is required for homodimer stability; dephosphorylation results in destabilization of the homodimer. Dephosphorylation at Thr-45 promotes the ATP-synthesis activity. As to expression, widely expressed. Most abundant in liver.

It localises to the nucleus. The enzyme catalyses D-ribose 5-phosphate + ATP + H(+) = ADP-D-ribose + diphosphate. It catalyses the reaction ADP-D-ribose + H2O = D-ribose 5-phosphate + AMP + 2 H(+). The catalysed reaction is 8-oxo-dGDP + H2O = 8-oxo-dGMP + phosphate + H(+). Enzyme that can either act as an ADP-sugar pyrophosphatase in absence of diphosphate or catalyze the synthesis of ATP in presence of diphosphate. In absence of diphosphate, hydrolyzes with similar activities various modified nucleoside diphosphates such as ADP-ribose, ADP-mannose, ADP-glucose, 8-oxo-GDP and 8-oxo-dGDP. Can also hydrolyze other nucleotide sugars with low activity. In presence of diphosphate, mediates the synthesis of ATP in the nucleus by catalyzing the conversion of ADP-ribose to ATP and ribose 5-phosphate. Nuclear ATP synthesis takes place when dephosphorylated at Thr-45. Nuclear ATP generation is required for extensive chromatin remodeling events that are energy-consuming. Does not play a role in U8 snoRNA decapping activity. Binds U8 snoRNA. The polypeptide is ADP-sugar pyrophosphatase (NUDT5) (Homo sapiens (Human)).